Reading from the N-terminus, the 31-residue chain is Antifungal protein 1 (31 aa).

Its subcellular location is the secreted. Its function is as follows. Antifungal activity against C.albicans ATCC 76615. The protein is Antifungal protein 1 of Musca domestica (House fly).